Here is a 298-residue protein sequence, read N- to C-terminus: Thymidylate synthase (298 aa).

DUMP is bound by residues R25 and 159 to 160; that span reads RR. C179 acts as the Nucleophile in catalysis. Residues 200-203, N211, and 241-243 each bind dUMP; these read RSVD and HLY. D203 provides a ligand contact to (6R)-5,10-methylene-5,6,7,8-tetrahydrofolate. A297 serves as a coordination point for (6R)-5,10-methylene-5,6,7,8-tetrahydrofolate.

Belongs to the thymidylate synthase family. Bacterial-type ThyA subfamily. In terms of assembly, homodimer.

Its subcellular location is the cytoplasm. It carries out the reaction dUMP + (6R)-5,10-methylene-5,6,7,8-tetrahydrofolate = 7,8-dihydrofolate + dTMP. The protein operates within pyrimidine metabolism; dTTP biosynthesis. Functionally, catalyzes the reductive methylation of 2'-deoxyuridine-5'-monophosphate (dUMP) to 2'-deoxythymidine-5'-monophosphate (dTMP) while utilizing 5,10-methylenetetrahydrofolate (mTHF) as the methyl donor and reductant in the reaction, yielding dihydrofolate (DHF) as a by-product. This enzymatic reaction provides an intracellular de novo source of dTMP, an essential precursor for DNA biosynthesis. The polypeptide is Thymidylate synthase (Cereibacter sphaeroides (strain ATCC 17029 / ATH 2.4.9) (Rhodobacter sphaeroides)).